We begin with the raw amino-acid sequence, 476 residues long: Serine--tRNA ligase (476 aa).

L-serine is bound at residue 280-282 (TAE). 311-313 (RAE) lines the ATP pocket. Position 334 (E334) interacts with L-serine. ATP is bound at residue 401–404 (EISS). Residue S436 coordinates L-serine.

It belongs to the class-II aminoacyl-tRNA synthetase family. Type-1 seryl-tRNA synthetase subfamily. In terms of assembly, homodimer. The tRNA molecule binds across the dimer.

It is found in the cytoplasm. It carries out the reaction tRNA(Ser) + L-serine + ATP = L-seryl-tRNA(Ser) + AMP + diphosphate + H(+). The catalysed reaction is tRNA(Sec) + L-serine + ATP = L-seryl-tRNA(Sec) + AMP + diphosphate + H(+). It functions in the pathway aminoacyl-tRNA biosynthesis; selenocysteinyl-tRNA(Sec) biosynthesis; L-seryl-tRNA(Sec) from L-serine and tRNA(Sec): step 1/1. Functionally, catalyzes the attachment of serine to tRNA(Ser). Is also able to aminoacylate tRNA(Sec) with serine, to form the misacylated tRNA L-seryl-tRNA(Sec), which will be further converted into selenocysteinyl-tRNA(Sec). The protein is Serine--tRNA ligase of Rhodopseudomonas palustris (strain HaA2).